The following is a 426-amino-acid chain: MERPVKDGIIYVQHCKFGKRTWRKIRAQLFAASPFGVARMEKFDARDHGTVSDISLQRCARRVIRLSDCVSVGPMGTESCPKATAAFYLTTTEKNYVLAAEQRDEWIEQLCQLAFQGKKEAEQSSSTGLQPIPMEENCLYSSWQDLTEFPVLVLRTEAAARCELHGHYVLAALPHSLTLKDAQSQQPLLTWPYPFLRKFGQDQNIFSFEAGRRSDSGEGTFTFSTPRAAELCRAVAAAIACQQQGQESPQPSAQGLSNQPWGAEAEDPQCSPTLGRAHSGSHSASYPSLNLLRFPPVEPEAPAPIVYASIARGQQPHFRPCPGQPLPEHLYENIFTAQPRPLAEEEAEEEEGRWELGCRQAPEGHSSEAAVPYPARSAPQPHTQRWAPGGSRGGAEEPSRPKPQRTLRAKLVRLLSRDGPGARDWS.

Residues 4 to 115 (PVKDGIIYVQ…WIEQLCQLAF (112 aa)) form the PH domain. An IRS-type PTB domain is found at 145-249 (DLTEFPVLVL…ACQQQGQESP (105 aa)). A disordered region spans residues 243-282 (QQGQESPQPSAQGLSNQPWGAEAEDPQCSPTLGRAHSGSH). Residues 247-260 (ESPQPSAQGLSNQP) are compositionally biased toward polar residues. At Tyr331 the chain carries Phosphotyrosine. The tract at residues 357–426 (GCRQAPEGHS…RDGPGARDWS (70 aa)) is disordered. A compositionally biased stretch (basic residues) spans 402 to 411 (KPQRTLRAKL).

It belongs to the DOK family. Type A subfamily. As to quaternary structure, homooligomer. Interacts with GRB2 and INPP5D/SHIP. Post-translationally, tyrosine-phosphorylated in the presence of GRB2.

The protein resides in the cytoplasm. The protein localises to the cell membrane. DOK proteins are enzymatically inert adaptor or scaffolding proteins. They provide a docking platform for the assembly of multimolecular signaling complexes. Plays a role as negative regulator of the mobilization of calcium ions and of calcium signaling. This is Docking protein 3 (DOK3) from Gallus gallus (Chicken).